The sequence spans 490 residues: Cytochrome P450 2C29 (490 aa).

A signal peptide spans methionine 1 to glycine 25. N6-acetyllysine is present on residues lysine 249, lysine 252, and lysine 375. Residue cysteine 435 participates in heme binding.

It belongs to the cytochrome P450 family. Requires heme as cofactor. In terms of tissue distribution, expressed in liver as well as in extrahepatic tissues including brain, kidney, lung, heart, and intestine.

It is found in the endoplasmic reticulum membrane. Its subcellular location is the microsome membrane. The enzyme catalyses an organic molecule + reduced [NADPH--hemoprotein reductase] + O2 = an alcohol + oxidized [NADPH--hemoprotein reductase] + H2O + H(+). The catalysed reaction is (5Z,8Z,11Z,14Z)-eicosatetraenoate + reduced [NADPH--hemoprotein reductase] + O2 = 14,15-epoxy-(5Z,8Z,11Z)-eicosatrienoate + oxidized [NADPH--hemoprotein reductase] + H2O + H(+). Its pathway is lipid metabolism; arachidonate metabolism. Its function is as follows. A cytochrome P450 monooxygenase that selectively catalyzes the epoxidation of 14,15 double bond of (5Z,8Z,11Z,14Z)-eicosatetraenoic acid (arachidonate) forming 14,15-epoxyeicosatrienoic acid (14,15-EET) regioisomer. Mechanistically, uses molecular oxygen inserting one oxygen atom into a substrate, and reducing the second into a water molecule, with two electrons provided by NADPH via cytochrome P450 reductase (CPR; NADPH--hemoprotein reductase). This is Cytochrome P450 2C29 from Mus musculus (Mouse).